The chain runs to 306 residues: Methionyl-tRNA formyltransferase (306 aa).

109–112 (SILP) is a (6S)-5,6,7,8-tetrahydrofolate binding site.

Belongs to the Fmt family.

It catalyses the reaction L-methionyl-tRNA(fMet) + (6R)-10-formyltetrahydrofolate = N-formyl-L-methionyl-tRNA(fMet) + (6S)-5,6,7,8-tetrahydrofolate + H(+). Attaches a formyl group to the free amino group of methionyl-tRNA(fMet). The formyl group appears to play a dual role in the initiator identity of N-formylmethionyl-tRNA by promoting its recognition by IF2 and preventing the misappropriation of this tRNA by the elongation apparatus. This Sphingopyxis alaskensis (strain DSM 13593 / LMG 18877 / RB2256) (Sphingomonas alaskensis) protein is Methionyl-tRNA formyltransferase.